We begin with the raw amino-acid sequence, 419 residues long: UDP-N-acetylglucosamine 1-carboxyvinyltransferase (419 aa).

Residue 22-23 (KN) coordinates phosphoenolpyruvate. Arg-93 provides a ligand contact to UDP-N-acetyl-alpha-D-glucosamine. Cys-117 functions as the Proton donor in the catalytic mechanism. A 2-(S-cysteinyl)pyruvic acid O-phosphothioketal modification is found at Cys-117. UDP-N-acetyl-alpha-D-glucosamine is bound by residues Asp-307 and Ile-329.

The protein belongs to the EPSP synthase family. MurA subfamily.

It is found in the cytoplasm. The enzyme catalyses phosphoenolpyruvate + UDP-N-acetyl-alpha-D-glucosamine = UDP-N-acetyl-3-O-(1-carboxyvinyl)-alpha-D-glucosamine + phosphate. The protein operates within cell wall biogenesis; peptidoglycan biosynthesis. Its function is as follows. Cell wall formation. Adds enolpyruvyl to UDP-N-acetylglucosamine. The protein is UDP-N-acetylglucosamine 1-carboxyvinyltransferase of Shewanella sp. (strain MR-7).